Consider the following 334-residue polypeptide: Thioredoxin reductase aclT (334 aa).

FAD-binding positions include 16-19 (GGPA), 38-43 (NASIDR), I93, A122, D294, and 302-303 (TL).

It belongs to the class-II pyridine nucleotide-disulfide oxidoreductase family. As to quaternary structure, homodimer. The cofactor is FAD.

It functions in the pathway mycotoxin biosynthesis. In terms of biological role, thioredoxin reductase; part of the gene cluster that mediates the biosynthesis of aspirochlorine (or antibiotic A30641), an unusual halogenated spiro compound with distinctive antifungal properties due to selective inhibition of protein biosynthesis, and which is also active against bacteria, viruses, and murine tumor cells. The non-ribosomal peptide synthetase (NRPS) aclP is responsible the formation of the diketopiperazine (DKP) core from the condensation of 2 phenylalanine residues. One Phe residue is tailored into chlorotyrosine by hydroxylation and chlorination, whereas the second Phe undergoes an unprecedented C-C bond cleavage to be converted into glycine. After formation of the DKP, sulfur is incorporated into the DKP by conjugation with glutathione by aclG, followed by its stepwise degradation to the thiol by aclI, aclJ and aclK, and the dithiol oxidation by aclT. In addition, oxygenases (aclB, aclC, aclL and aclO) and O-methyltransferases (aclM and aclU) act as tailoring enzymes to produce the intermediate dechloroaspirochlorine. Ultimately, chlorination of dechloroaspirochlorine by the halogenase aclH is the last step in the aspirochlorine pathway. The polypeptide is Thioredoxin reductase aclT (Aspergillus oryzae (strain ATCC 42149 / RIB 40) (Yellow koji mold)).